A 477-amino-acid polypeptide reads, in one-letter code: Otolin-1 (477 aa).

Positions 1–23 (MWMFSWLCAILIILAIAGMNTIA) are cleaved as a signal peptide. 2 disordered regions span residues 28-55 (HTKF…PEEE) and 111-337 (QKGE…KGEL). Positions 33–42 (KKSEEREMPK) are enriched in basic and acidic residues. In terms of domain architecture, Collagen-like 1 spans 116-175 (GETGQPGPKGEAGNLGIPGPPGVVGPQGPRGYKGEKGLKGERGDQGVPGYPGKPGAQGEP). Proline 133 and proline 136 each carry hydroxyproline. The segment covering 147–159 (YKGEKGLKGERGD) has biased composition (basic and acidic residues). 3 positions are modified to hydroxyproline: proline 163, proline 166, and proline 169. At lysine 178 the chain carries 5-hydroxylysine. A glycan (O-linked (Gal...) hydroxylysine) is linked at lysine 178. Residues 182–191 (GNIGLGGVKG) show a composition bias toward gly residues. N-linked (GlcNAc...) asparagine glycosylation occurs at asparagine 202. 2 consecutive Collagen-like domains span residues 209 to 268 (GDQG…KGSK) and 278 to 337 (GRNG…KGEL). Proline 223 carries the hydroxyproline modification. Composition is skewed to basic and acidic residues over residues 226–240 (KGEK…EMGD) and 247–277 (SGER…EGKS). 2 positions are modified to hydroxyproline: proline 283 and proline 301. Positions 298 to 310 (LGPPGLLGPTGPK) are enriched in low complexity. At lysine 310 the chain carries 5-hydroxylysine. Residue lysine 310 is glycosylated (O-linked (Gal...) hydroxylysine). The region spanning 338–473 (ARVPRSAFSA…GFLLYPEETS (136 aa)) is the C1q domain. A glycan (N-linked (GlcNAc...) asparagine) is linked at asparagine 381.

It belongs to the OTOL1 family. Homooligomer; disulfide-linked; probably forms homotrimers. Interacts with OC90. Interacts with CBLN1.

The protein localises to the secreted. It is found in the extracellular space. It localises to the extracellular matrix. Functionally, collagen-like protein specifically expressed in the inner ear, which provides an organic scaffold for otoconia, a calcium carbonate structure in the saccule and utricle of the ear. Acts as a scaffold for biomineralization: sequesters calcium and forms interconnecting fibrils between otoconia that are incorporated into the calcium crystal structure. Together with OC90, modulates calcite crystal morphology and growth kinetics. In Homo sapiens (Human), this protein is Otolin-1.